The sequence spans 277 residues: 3-methyl-2-oxobutanoate hydroxymethyltransferase (277 aa).

Mg(2+)-binding residues include Asp43 and Asp82. Residues 43-44 (DS), Asp82, and Lys112 contribute to the 3-methyl-2-oxobutanoate site. Glu114 contributes to the Mg(2+) binding site. The active-site Proton acceptor is the Glu181.

This sequence belongs to the PanB family. As to quaternary structure, homodecamer; pentamer of dimers. Requires Mg(2+) as cofactor.

The protein resides in the cytoplasm. It catalyses the reaction 3-methyl-2-oxobutanoate + (6R)-5,10-methylene-5,6,7,8-tetrahydrofolate + H2O = 2-dehydropantoate + (6S)-5,6,7,8-tetrahydrofolate. The protein operates within cofactor biosynthesis; (R)-pantothenate biosynthesis; (R)-pantoate from 3-methyl-2-oxobutanoate: step 1/2. In terms of biological role, catalyzes the reversible reaction in which hydroxymethyl group from 5,10-methylenetetrahydrofolate is transferred onto alpha-ketoisovalerate to form ketopantoate. This chain is 3-methyl-2-oxobutanoate hydroxymethyltransferase, found in Bacillus subtilis (strain 168).